Here is a 1057-residue protein sequence, read N- to C-terminus: Adenylate-forming reductase stbB (1057 aa).

Residues 21–378 (STKRQPGAVC…FRLRTDMNFE (358 aa)) form an adenylation (A) domain region. AMP-binding positions include His251, 344–345 (NF), Thr349, and 423–426 (AVGR). Positions 564-651 (ETLEEDIKAL…QMAAAIKNPS (88 aa)) constitute a Carrier domain. Residue Ser600 is modified to O-(pantetheine 4'-phosphoryl)serine. The segment at 693-1025 (IVVVTGSSGS…SGAVILGTDV (333 aa)) is reductase (R) domain. NADP(+) contacts are provided by residues 700 to 703 (SGSL), 783 to 785 (AAW), Tyr858, and Lys862.

Belongs to the adenylate-forming reductase family.

It catalyses the reaction ilicicolinate B + AH2 + ATP = ilicicolin B + A + AMP + diphosphate. It functions in the pathway secondary metabolite biosynthesis; terpenoid biosynthesis. Its function is as follows. Nonribosomal peptide synthase-like protein; part of the cluster that mediates the biosynthesis of LL-Z1272-beta, also known as ilicicolin B, a prenylated aryl-aldehyde produced by several fungi and that serves as a key pathway intermediate for many fungal meroterpenoids. The first step in the pathway is performed by the non-reducing polyketide synthase stbA that produces orsellinic acid by condensing acetyl-CoA with 3 malonyl-CoA units. The prenyltransferase stbC then prenylates orsenilic acid into grifolic acid. Finally, grifolic acid is reduced to ilicicolin B by the NRPS-like protein stbB. The sequence is that of Adenylate-forming reductase stbB from Stachybotrys bisbyi (Hyalostachybotrys bisbyi).